Here is a 73-residue protein sequence, read N- to C-terminus: Putative antitoxin VapB18 (73 aa).

It belongs to the UPF0330 family.

Possibly the antitoxin component of a type II toxin-antitoxin (TA) system. Its cognate toxin is VapC18 (Potential). This is Putative antitoxin VapB18 (vapB18) from Archaeoglobus fulgidus (strain ATCC 49558 / DSM 4304 / JCM 9628 / NBRC 100126 / VC-16).